The primary structure comprises 286 residues: uncharacterized protein (286 aa).

The region spanning Met1–Phe146 is the Integrase catalytic domain. A compositionally biased stretch (basic residues) spans Arg252–Lys263. The interval Arg252–Met286 is disordered. A compositionally biased stretch (basic and acidic residues) spans Lys264–Asp273. Residues Thr274–Met286 are compositionally biased toward low complexity.

This is an uncharacterized protein from Caenorhabditis elegans.